Reading from the N-terminus, the 249-residue chain is Triosephosphate isomerase (249 aa).

Residue 9–11 coordinates substrate; sequence NWK. Residue H94 is the Electrophile of the active site. The active-site Proton acceptor is the E166. Substrate-binding positions include G172 and 232 to 233; that span reads GG.

This sequence belongs to the triosephosphate isomerase family. In terms of assembly, homodimer.

It localises to the cytoplasm. It carries out the reaction D-glyceraldehyde 3-phosphate = dihydroxyacetone phosphate. The protein operates within carbohydrate biosynthesis; gluconeogenesis. It participates in carbohydrate degradation; glycolysis; D-glyceraldehyde 3-phosphate from glycerone phosphate: step 1/1. Functionally, involved in the gluconeogenesis. Catalyzes stereospecifically the conversion of dihydroxyacetone phosphate (DHAP) to D-glyceraldehyde-3-phosphate (G3P). The sequence is that of Triosephosphate isomerase from Xylella fastidiosa (strain M12).